A 406-amino-acid polypeptide reads, in one-letter code: Phosphorylase b kinase gamma catalytic chain, liver/testis isoform (406 aa).

The Protein kinase domain maps to 24–291 (YDPKDIIGRG…AEQALQHPFF (268 aa)). Residues 30–38 (IGRGVSSVV) and Lys53 contribute to the ATP site. The Proton acceptor role is filled by Asp153. Positions 306 to 330 (QRFRVAVWTILAAGRVALSSHRLRP) are calmodulin-binding (domain-N). The segment at 346–370 (VRRLIDNCAFRLYGHWVKKGEQQNR) is calmodulin-binding (domain-C).

This sequence belongs to the protein kinase superfamily. CAMK Ser/Thr protein kinase family. As to quaternary structure, hexadecamer of 4 heterotetramers, each composed of alpha, beta, gamma, and delta subunits. Alpha (PHKA1 or PHKA2) and beta (PHKB) are regulatory subunits, gamma (PHKG1 or PHKG2) is the catalytic subunit, and delta is calmodulin.

The enzyme catalyses 2 ATP + phosphorylase b = 2 ADP + phosphorylase a.. Functionally, catalytic subunit of the phosphorylase b kinase (PHK), which mediates the neural and hormonal regulation of glycogen breakdown (glycogenolysis) by phosphorylating and thereby activating glycogen phosphorylase. May regulate glycogeneolysis in the testis. In vitro, phosphorylates PYGM. The chain is Phosphorylase b kinase gamma catalytic chain, liver/testis isoform (Phkg2) from Mus musculus (Mouse).